The following is a 355-amino-acid chain: Elongation factor Ts (355 aa).

The involved in Mg(2+) ion dislocation from EF-Tu stretch occupies residues Thr-82–Val-85.

The protein belongs to the EF-Ts family.

The protein localises to the cytoplasm. Associates with the EF-Tu.GDP complex and induces the exchange of GDP to GTP. It remains bound to the aminoacyl-tRNA.EF-Tu.GTP complex up to the GTP hydrolysis stage on the ribosome. In Helicobacter pylori (strain Shi470), this protein is Elongation factor Ts.